Reading from the N-terminus, the 776-residue chain is Transcription factor MYB3R-1 (776 aa).

A disordered region spans residues 1–41 (MKREMKAPTTPLESLQGDLKGKQGRTSGPARRSTKGQWTPE). 3 HTH myb-type domains span residues 30 to 81 (ARRS…QKVL), 82 to 137 (NPEL…NPGI), and 138 to 188 (NKNA…KKKL). DNA-binding regions (H-T-H motif) lie at residues 58 to 81 (WKKI…QKVL), 110 to 133 (WSTI…HNHL), and 161 to 184 (WAEL…NSSV). Disordered regions lie at residues 217 to 253 (SSWM…STND), 364 to 384 (FQSS…TDPE), and 401 to 435 (DNMK…AETH). Polar residues-rich tracts occupy residues 240–253 (CSQA…STND), 364–380 (FQSS…SNSD), and 423–432 (GKGSLCSQAA). The short motif at 648–655 (KKRHRDLL) is the Nuclear localization signal element.

Component of a DREAM-like complex which modulates a variety of developmentally regulated genes and of the mitotic genes in proliferating and differentiated cells. As to expression, expressed ubiquitously at low levels. Expressed in roots, cotyledons, flowers and leaves, especially in vascular tissues.

The protein localises to the nucleus. In terms of biological role, transcription factor that binds 5'-AACGG-3' motifs in gene promoters. Transcription activator involved in the regulation of cytokinesis, probably via the activation of several G2/M phase-specific genes transcription (e.g. KNOLLE). Transcription repressor that regulates organ growth. Binds to the promoters of G2/M-specific genes and to E2F target genes to prevent their expression in post-mitotic cells and to restrict the time window of their expression in proliferating cells. Required for the maintenance of diploidy. This Arabidopsis thaliana (Mouse-ear cress) protein is Transcription factor MYB3R-1.